The primary structure comprises 285 residues: MTFLQLLIIAVVQGITEFLPISSSGHLILIPNFTEFPDQGPLIDVAVHVGSLLAIIVYFFKDVLTLARGGFASIGIGTDRPDAPSERRLFWWIVLGTIPAVAFGLAIKLGAFNSIAETWFNITVIDDDLMSSIRFTDLIAFNLIVYGIALGLADWLGKEVKKFEDMSWRDGLIVGIAQALAIIPGTSRSGVTMTAARALGYSRYESARFSFLLSIPAVAGAGVLIVPEIFEAGATLAMDALIAGVLTFIAAFLTMAFLMNFLKRASMLVFVFYRVAMGCALLAFF.

7 helical membrane passes run 40–60 (GPLIDVAVHVGSLLAIIVYFF), 89–109 (LFWWIVLGTIPAVAFGLAIKL), 137–157 (DLIAFNLIVYGIALGLADWLG), 171–191 (GLIVGIAQALAIIPGTSRSGV), 209–229 (FSFLLSIPAVAGAGVLIVPEI), 241–261 (LIAGVLTFIAAFLTMAFLMNF), and 265–285 (ASMLVFVFYRVAMGCALLAFF).

It belongs to the UppP family.

It is found in the cell inner membrane. It carries out the reaction di-trans,octa-cis-undecaprenyl diphosphate + H2O = di-trans,octa-cis-undecaprenyl phosphate + phosphate + H(+). Catalyzes the dephosphorylation of undecaprenyl diphosphate (UPP). Confers resistance to bacitracin. The protein is Undecaprenyl-diphosphatase of Erythrobacter litoralis (strain HTCC2594).